The primary structure comprises 917 residues: PAX3- and PAX7-binding protein 1 (917 aa).

Residues 1 to 11 (MFRKARRVNVR) are compositionally biased toward basic residues. Disordered stretches follow at residues 1-123 (MFRK…FKVK), 143-205 (LEKS…GAFS), and 229-275 (RKKR…RIVF). Phosphoserine is present on Ser-16. Over residues 16–28 (SEEEERERDEEQE) the composition is skewed to acidic residues. Gly residues-rich tracts occupy residues 40–50 (EEAGPGGGDRA) and 73–85 (AEAGGGFPGGAEP). Residue Lys-149 forms a Glycyl lysine isopeptide (Lys-Gly) (interchain with G-Cter in SUMO1); alternate linkage. A Glycyl lysine isopeptide (Lys-Gly) (interchain with G-Cter in SUMO2); alternate cross-link involves residue Lys-149. A phosphoserine mark is found at Ser-154, Ser-155, and Ser-158. The segment covering 161–172 (PLDKTGHVKDTN) has biased composition (basic and acidic residues). Residues 183–193 (GEDEMDMESEK) are compositionally biased toward acidic residues. Ser-191 is subject to Phosphoserine. Residues 234 to 256 (MARELGDFTPHDNEPGKGRLVRE) are compositionally biased toward basic and acidic residues. Over residues 257–268 (DENDASDDEDDD) the composition is skewed to acidic residues. Phosphoserine occurs at positions 262 and 295. Disordered regions lie at residues 362–381 (SSDAKSQKTDNTVPFKTPSN) and 530–564 (AEREARRTRRRQAREQTGKMADHLEGLSSDDEETS). Residues 378 to 558 (TPSNEMTPVT…MADHLEGLSS (181 aa)) form a necessary and sufficient for interaction with PAX7 region. A compositionally biased stretch (basic and acidic residues) spans 542–554 (AREQTGKMADHLE). Ser-557 and Ser-558 each carry phosphoserine. Position 563 is a phosphothreonine (Thr-563).

It belongs to the GCF family. In terms of assembly, interacts with PAX3 and PAX7. Interacts with WDR5; associates with a histone methyltransferase (HMT) complex composed at least of RBBP5, ASH2L, SET1, SET2 and KMT2A/MLL1, KMT2D/MLL2, KMT2C/MLL3 and KMT2B/MLL4 through direct interaction with WDR5. In terms of tissue distribution, ubiquitous.

Its subcellular location is the nucleus. Its function is as follows. Adapter protein linking the transcription factors PAX3 and PAX7 to the histone methylation machinery and involved in myogenesis. Associates with a histone methyltransferase complex that specifically mediates dimethylation and trimethylation of 'Lys-4' of histone H3. Mediates the recruitment of that complex to the transcription factors PAX3 and PAX7 on chromatin to regulate the expression of genes involved in muscle progenitor cells proliferation including ID3 and CDC20. The chain is PAX3- and PAX7-binding protein 1 (PAXBP1) from Homo sapiens (Human).